The primary structure comprises 223 residues: Ribosome maturation factor RimM (223 aa).

Residues 1-12 (MARRPGSSSRGP) show a composition bias toward low complexity. Disordered stretches follow at residues 1-44 (MARR…DPGL) and 204-223 (ADPP…DDPG). Residues 136 to 210 (EDEFFLTDLI…KVVADPPDDL (75 aa)) enclose the PRC barrel domain.

It belongs to the RimM family. Binds ribosomal protein uS19.

It localises to the cytoplasm. Functionally, an accessory protein needed during the final step in the assembly of 30S ribosomal subunit, possibly for assembly of the head region. Essential for efficient processing of 16S rRNA. May be needed both before and after RbfA during the maturation of 16S rRNA. It has affinity for free ribosomal 30S subunits but not for 70S ribosomes. This Methylorubrum extorquens (strain PA1) (Methylobacterium extorquens) protein is Ribosome maturation factor RimM.